Reading from the N-terminus, the 526-residue chain is Probable carboxypeptidase 2 (526 aa).

Positions 1–21 (MVAYRLLALISLGLGSHCASA) are cleaved as a signal peptide. N-linked (GlcNAc...) asparagine glycosylation is present at N46. The interval 53-76 (PAFTSPGTVPRGFSDGTSGPTRDE) is disordered. The region spanning 71-351 (GPTRDETMEG…VMAKSILQTA (281 aa)) is the Peptidase M14 domain. A glycan (N-linked (GlcNAc...) asparagine) is linked at N116. Zn(2+) is bound by residues H136, E139, and H224. E322 serves as the catalytic Proton donor/acceptor. N-linked (GlcNAc...) asparagine glycosylation is found at N393 and N459.

This sequence belongs to the peptidase M14 family. Requires Zn(2+) as cofactor.

It is found in the secreted. Functionally, extracellular metalloprotease that contributes to pathogenicity. This Arthroderma benhamiae (strain ATCC MYA-4681 / CBS 112371) (Trichophyton mentagrophytes) protein is Probable carboxypeptidase 2 (MCPB).